We begin with the raw amino-acid sequence, 147 residues long: Large ribosomal subunit protein uL15 (147 aa).

The disordered stretch occupies residues Met1–Lys45. The span at Thr30–Gly44 shows a compositional bias: basic residues.

The protein belongs to the universal ribosomal protein uL15 family. Part of the 50S ribosomal subunit.

Binds to the 23S rRNA. In Thermotoga sp. (strain RQ2), this protein is Large ribosomal subunit protein uL15.